The following is a 233-amino-acid chain: Nickel import system ATP-binding protein NikE (233 aa).

Residues 2-228 (IELKHVTFGY…DRHPYTKELV (227 aa)) enclose the ABC transporter domain. ATP is bound at residue 35 to 42 (GESGCGKS).

This sequence belongs to the ABC transporter superfamily. In terms of assembly, the complex is composed of two ATP-binding proteins (NikD and NikE), two transmembrane proteins (NikB and NikC) and a solute-binding protein (NikA).

It is found in the cell membrane. It carries out the reaction Ni(2+)(out) + ATP + H2O = Ni(2+)(in) + ADP + phosphate + H(+). In terms of biological role, part of the ABC transporter complex NikABCDE (Opp2) involved in nickel import. Probably responsible for energy coupling to the transport system. This Staphylococcus aureus (strain Mu50 / ATCC 700699) protein is Nickel import system ATP-binding protein NikE.